Reading from the N-terminus, the 1231-residue chain is Fanconi anemia group J protein homolog (1231 aa).

Residues 11 to 448 (GGVKILFPCR…SDHEPLRAVC (438 aa)) form the Helicase ATP-binding domain. Position 46 to 53 (46 to 53 (SPTGSGKS)) interacts with ATP. Disordered regions lie at residues 104 to 126 (TFSSDRQMNSTDNAPSNISGASS) and 147 to 166 (QDDDFQTDRKRIRQSHDEQL). Over residues 152–166 (QTDRKRIRQSHDEQL) the composition is skewed to basic and acidic residues. The short motif at 155–173 (RKRIRQSHDEQLQARKRRC) is the Nuclear localization signal element. The [4Fe-4S] cluster site is built by Cys-291, Cys-304, Cys-316, and Cys-356. Residues 399–402 (DEAH) carry the DEAH box motif. The span at 890–903 (SKNQQQRMQMSSTN) shows a compositional bias: polar residues. Disordered regions lie at residues 890 to 924 (SKNQQQRMQMSSTNCDDEPSQGTSSSSKNTSPTSS), 936 to 956 (VSEFTQPTSSTQSSVTSPPEI), and 1195 to 1231 (GNENAFNIGRNKGTEQKNRENRLSRSRNKGVSSFFLD). Low complexity-rich tracts occupy residues 909–924 (SQGTSSSSKNTSPTSS) and 940–954 (TQPTSSTQSSVTSPP). The segment covering 1206-1217 (KGTEQKNRENRL) has biased composition (basic and acidic residues).

The protein belongs to the DEAD box helicase family. DEAH subfamily. [4Fe-4S] cluster is required as a cofactor.

The protein resides in the nucleus. The enzyme catalyses Couples ATP hydrolysis with the unwinding of duplex DNA at the replication fork by translocating in the 5'-3' direction. This creates two antiparallel DNA single strands (ssDNA). The leading ssDNA polymer is the template for DNA polymerase III holoenzyme which synthesizes a continuous strand.. It catalyses the reaction ATP + H2O = ADP + phosphate + H(+). Its function is as follows. DNA-dependent helicase and 5' to 3' DNA helicase required for the maintenance of chromosomal stability. Involved in the repair of DNA double-strand breaks by homologous recombination. Involved in the repair of abasic sites at replication forks by promoting the degradation of DNA-protein cross-links: acts by catalyzing unfolding of HMCES DNA-protein cross-link via its helicase activity, exposing the underlying DNA and enabling cleavage of the DNA-protein adduct by the SPRTN metalloprotease. The polypeptide is Fanconi anemia group J protein homolog (brip1.L) (Xenopus laevis (African clawed frog)).